The sequence spans 129 residues: MQFTEFWPFILYAGMVLVLVALIVGFSYILGQRPRERATDEPFESGVVTVGFARLRFPAKFYLVAVLFVIFDMEAAFIFAWAVAFRETGWIGYGGALAFITILGVALIYEWRVGALDWQPKGRKHKKHR.

3 helical membrane passes run Phe6–Phe26, Leu63–Val83, and Gly89–Tyr109.

Belongs to the complex I subunit 3 family. NDH-1 is composed of 14 different subunits. Subunits NuoA, H, J, K, L, M, N constitute the membrane sector of the complex.

Its subcellular location is the cell inner membrane. The catalysed reaction is a quinone + NADH + 5 H(+)(in) = a quinol + NAD(+) + 4 H(+)(out). Its function is as follows. NDH-1 shuttles electrons from NADH, via FMN and iron-sulfur (Fe-S) centers, to quinones in the respiratory chain. The immediate electron acceptor for the enzyme in this species is believed to be ubiquinone. Couples the redox reaction to proton translocation (for every two electrons transferred, four hydrogen ions are translocated across the cytoplasmic membrane), and thus conserves the redox energy in a proton gradient. The sequence is that of NADH-quinone oxidoreductase subunit A from Nitrosococcus oceani (strain ATCC 19707 / BCRC 17464 / JCM 30415 / NCIMB 11848 / C-107).